Reading from the N-terminus, the 101-residue chain is MAKQSMKAREVVRVKLAEKYRAKREELKAIISGVNSSDEDRWDAVLKLQTLPRDSSPSRQRKRCRQTGRPHGYVGKFGLSRIKLREAAMRGEVPGLKKASW.

This sequence belongs to the universal ribosomal protein uS14 family. Part of the 30S ribosomal subunit. Contacts proteins S3 and S10.

In terms of biological role, binds 16S rRNA, required for the assembly of 30S particles and may also be responsible for determining the conformation of the 16S rRNA at the A site. In Serratia proteamaculans (strain 568), this protein is Small ribosomal subunit protein uS14.